The following is a 209-amino-acid chain: High frequency lysogenization protein HflD homolog (209 aa).

The protein belongs to the HflD family.

It localises to the cytoplasm. It is found in the cell inner membrane. The polypeptide is High frequency lysogenization protein HflD homolog (Sodalis glossinidius (strain morsitans)).